The following is a 357-amino-acid chain: Protein pelota homolog (357 aa).

It belongs to the eukaryotic release factor 1 family. Pelota subfamily. As to quaternary structure, monomer. A divalent metal cation serves as cofactor.

The protein resides in the cytoplasm. In terms of biological role, may function in recognizing stalled ribosomes, interact with stem-loop structures in stalled mRNA molecules, and effect endonucleolytic cleavage of the mRNA. May play a role in the release non-functional ribosomes and degradation of damaged mRNAs. Has endoribonuclease activity. In Thermococcus kodakarensis (strain ATCC BAA-918 / JCM 12380 / KOD1) (Pyrococcus kodakaraensis (strain KOD1)), this protein is Protein pelota homolog.